Consider the following 86-residue polypeptide: U15-lycotoxin-Ls1a (86 aa).

The N-terminal stretch at 1–20 (MNSKIFAVLFLLAFLSCVLS) is a signal peptide. One can recognise a WAP domain in the interval 21–66 (DQYCPKSSITACKKMNIRNDCCKDDDCTGGSWCCATPCGNFCKYPT). Intrachain disulfides connect Cys-24/Cys-54, Cys-32/Cys-58, Cys-41/Cys-53, Cys-42/Cys-80, and Cys-47/Cys-62.

Belongs to the venom protein 11 family. 01 (wap-1) subfamily. Post-translationally, contains 5 disulfide bonds. Expressed by the venom gland.

It localises to the secreted. Functionally, has antibacterial activity. This is U15-lycotoxin-Ls1a from Lycosa singoriensis (Wolf spider).